The primary structure comprises 254 residues: PAXIP1-associated glutamate-rich protein 1 (254 aa).

Disordered regions lie at residues 1–111 and 127–254; these read MSLA…PPSE and LQAE…QRKY. Residues 45-62 show a composition bias toward basic and acidic residues; the sequence is KAEDEGEGGREETEREGS. Over residues 78-98 the composition is skewed to acidic residues; sequence EPAEEDSEDWCVPCSDEEVEL. The sufficient for interaction with NCOA1 stretch occupies residues 116-160; sequence YELLAAHGTLELQAEILPRRPPTPEAQSEEERSDEEPEAKEEEEE. Thr138 bears the Phosphothreonine mark. Residues 142–159 are compositionally biased toward acidic residues; it reads QSEEERSDEEPEAKEEEE. A phosphoserine mark is found at Ser143 and Ser148. The segment at 161–254 is sufficient for interaction with ESR1; that stretch reads KPHMPTEFDF…SSLFPRQRKY (94 aa). A compositionally biased stretch (basic and acidic residues) spans 195 to 223; it reads QKREARLDKVLSDMKRHKKLEEQILRTGR. Phosphoserine is present on Ser237.

Component of the KMT2 family MLL2/MLL3 complex (also named ASCOM complex), at least composed of the HMTs KMT2D and/or KMT2C, the common subunits ASH2L, RBBP5, WDR5 and DPY30, and the complex type-specific subunits PAXIP1/PTIP, PAGR1, NCOA6 and KDM6A; PAXIP1 is required for the association with the MLL2/MLL3 complex. Forms a constitutive complex with PAXIP1/PTIP independently of the MLL2/MLL3 complex. Interacts with NCOA1, ESR1, NR3C1, AR. In terms of tissue distribution, ubiquitously expressed.

It is found in the nucleus. Functionally, its association with the histone methyltransferase MLL2/MLL3 complex is suggesting a role in epigenetic transcriptional activation. However, in association with PAXIP1/PTIP is proposed to function at least in part independently of the MLL2/MLL3 complex. Proposed to be recruited by PAXIP1 to sites of DNA damage where the PAGR1:PAXIP1 complex is required for cell survival in response to DNA damage independently of the MLL2/MLL3 complex. However, its function in DNA damage has been questioned. During immunoglobulin class switching in activated B-cells is involved in transcription regulation of downstream switch regions at the immunoglobulin heavy-chain (Igh) locus independently of the MLL2/MLL3 complex. Involved in both estrogen receptor-regulated gene transcription and estrogen-stimulated G1/S cell-cycle transition. Acts as a transcriptional cofactor for nuclear hormone receptors. Inhibits the induction properties of several steroid receptors such as NR3C1, AR and PPARG; the mechanism of inhibition appears to be gene-dependent. The sequence is that of PAXIP1-associated glutamate-rich protein 1 (PAGR1) from Homo sapiens (Human).